A 238-amino-acid chain; its full sequence is Large ribosomal subunit protein uL1 (238 aa).

Belongs to the universal ribosomal protein uL1 family. As to quaternary structure, part of the 50S ribosomal subunit.

In terms of biological role, binds directly to 23S rRNA. The L1 stalk is quite mobile in the ribosome, and is involved in E site tRNA release. Protein L1 is also a translational repressor protein, it controls the translation of the L11 operon by binding to its mRNA. This chain is Large ribosomal subunit protein uL1, found in Rickettsia prowazekii (strain Madrid E).